Consider the following 167-residue polypeptide: Large ribosomal subunit protein uL10 (167 aa).

Belongs to the universal ribosomal protein uL10 family. As to quaternary structure, part of the ribosomal stalk of the 50S ribosomal subunit. The N-terminus interacts with L11 and the large rRNA to form the base of the stalk. The C-terminus forms an elongated spine to which L12 dimers bind in a sequential fashion forming a multimeric L10(L12)X complex.

In terms of biological role, forms part of the ribosomal stalk, playing a central role in the interaction of the ribosome with GTP-bound translation factors. This chain is Large ribosomal subunit protein uL10, found in Tolumonas auensis (strain DSM 9187 / NBRC 110442 / TA 4).